The sequence spans 398 residues: Acetate kinase (398 aa).

Asparagine 8 serves as a coordination point for Mg(2+). Lysine 15 is a binding site for ATP. Arginine 89 contributes to the substrate binding site. Residue aspartate 146 is the Proton donor/acceptor of the active site. ATP-binding positions include 206–210 (HIGNG), 283–285 (DMR), and 331–335 (GMGEN). Glutamate 383 contacts Mg(2+).

This sequence belongs to the acetokinase family. As to quaternary structure, homodimer. The cofactor is Mg(2+). Requires Mn(2+) as cofactor.

It is found in the cytoplasm. It catalyses the reaction acetate + ATP = acetyl phosphate + ADP. Its pathway is metabolic intermediate biosynthesis; acetyl-CoA biosynthesis; acetyl-CoA from acetate: step 1/2. In terms of biological role, catalyzes the formation of acetyl phosphate from acetate and ATP. Can also catalyze the reverse reaction. In Streptococcus pyogenes serotype M5 (strain Manfredo), this protein is Acetate kinase.